The following is a 405-amino-acid chain: Replication factor C large subunit (405 aa).

ATP is bound at residue 47-54 (GPPGVGKT).

The protein belongs to the activator 1 small subunits family. RfcL subfamily. In terms of assembly, heteromultimer composed of small subunits (RfcS) and large subunits (RfcL).

Its function is as follows. Part of the RFC clamp loader complex which loads the PCNA sliding clamp onto DNA. This is Replication factor C large subunit from Saccharolobus islandicus (strain M.16.27) (Sulfolobus islandicus).